Reading from the N-terminus, the 315-residue chain is Glutathione synthetase (315 aa).

In terms of domain architecture, ATP-grasp spans 125-310 (KLFTAWFSEF…ITGMLFDAIE (186 aa)). 151 to 207 (HQAKGDIILKPLDGMGGTSIFRVKQDDPNLGVIIETLTQYGNQYAMAQAFIPEITKG) serves as a coordination point for ATP. Mg(2+) contacts are provided by glutamate 281 and asparagine 283.

This sequence belongs to the prokaryotic GSH synthase family. It depends on Mg(2+) as a cofactor. Mn(2+) serves as cofactor.

The enzyme catalyses gamma-L-glutamyl-L-cysteine + glycine + ATP = glutathione + ADP + phosphate + H(+). It participates in sulfur metabolism; glutathione biosynthesis; glutathione from L-cysteine and L-glutamate: step 2/2. This Shewanella oneidensis (strain ATCC 700550 / JCM 31522 / CIP 106686 / LMG 19005 / NCIMB 14063 / MR-1) protein is Glutathione synthetase.